The chain runs to 82 residues: U-actitoxin-Avd3k (82 aa).

A signal peptide spans 1 to 16; the sequence is MVFLLCFFLVADVSYG. The BPTI/Kunitz inhibitor domain occupies 21–71; sequence CLLPMDVGRCRARHPRYYYNSSSKRCEKFIYGGCRGNANNFITKKECEKVC. 3 disulfide bridges follow: Cys21-Cys71, Cys30-Cys54, and Cys46-Cys67. Positions 76 to 82 are excised as a propeptide; sequence RDSPKEN.

It belongs to the venom Kunitz-type family. Sea anemone type 2 potassium channel toxin subfamily.

It is found in the secreted. The protein localises to the nematocyst. Functionally, dual-function toxin that inhibits both the serine protease trypsin and voltage-gated potassium channels Kv1.2/KCNA2. The protein is U-actitoxin-Avd3k of Anemonia viridis (Snakelocks anemone).